Reading from the N-terminus, the 88-residue chain is MEKKRIYLFCSAGMSTSLLVSKMKAQAEKYDVPVLIDAYPETLAGEKGQDADLVLLGPQIAYMLPEIQQQLPGKPVEVIDTLLYGKVD.

The region spanning Lys3–Asp88 is the PTS EIIB type-3 domain. Catalysis depends on Cys10, which acts as the Phosphocysteine intermediate. Residue Cys10 is modified to Phosphocysteine; by EIIA.

It is found in the cytoplasm. It catalyses the reaction D-cellobiose(out) + N(pros)-phospho-L-histidyl-[protein] = 6-phospho-beta-D-glucosyl-(1-&gt;4)-D-glucose(in) + L-histidyl-[protein]. In terms of biological role, the phosphoenolpyruvate-dependent sugar phosphotransferase system (sugar PTS), a major carbohydrate active transport system, catalyzes the phosphorylation of incoming sugar substrates concomitantly with their translocation across the cell membrane. The enzyme II CelABD PTS system is involved in cellobiose transport. In Aeromonas hydrophila, this protein is PTS system cellobiose-specific EIIB component.